A 320-amino-acid chain; its full sequence is Cytochrome f (320 aa).

The N-terminal stretch at 1 to 35 (MQMRNTFSWIKEEIIRFIAVSLIIYIITRAPISNA) is a signal peptide. Residues tyrosine 36, cysteine 56, cysteine 59, and histidine 60 each coordinate heme. A helical transmembrane segment spans residues 286 to 306 (VQGLLLFLASIILAQIFLVLK).

This sequence belongs to the cytochrome f family. In terms of assembly, the 4 large subunits of the cytochrome b6-f complex are cytochrome b6, subunit IV (17 kDa polypeptide, petD), cytochrome f and the Rieske protein, while the 4 small subunits are PetG, PetL, PetM and PetN. The complex functions as a dimer. Heme serves as cofactor.

It is found in the plastid. The protein resides in the chloroplast thylakoid membrane. Component of the cytochrome b6-f complex, which mediates electron transfer between photosystem II (PSII) and photosystem I (PSI), cyclic electron flow around PSI, and state transitions. The polypeptide is Cytochrome f (Morus indica (Mulberry)).